The primary structure comprises 30 residues: Thylakoid lumenal 17 kDa protein (30 aa).

The protein localises to the plastid. It is found in the chloroplast thylakoid lumen. In Spinacia oleracea (Spinach), this protein is Thylakoid lumenal 17 kDa protein.